The primary structure comprises 88 residues: uncharacterized protein (88 aa).

Belongs to the phD/YefM antitoxin family.

This is an uncharacterized protein from Sinorhizobium fredii (strain NBRC 101917 / NGR234).